The following is a 151-amino-acid chain: Deoxyuridine 5'-triphosphate nucleotidohydrolase (151 aa).

Substrate contacts are provided by residues 70–72 (RSG), N83, 87–89 (LID), and M97.

Belongs to the dUTPase family. It depends on Mg(2+) as a cofactor.

It catalyses the reaction dUTP + H2O = dUMP + diphosphate + H(+). Its pathway is pyrimidine metabolism; dUMP biosynthesis; dUMP from dCTP (dUTP route): step 2/2. In terms of biological role, this enzyme is involved in nucleotide metabolism: it produces dUMP, the immediate precursor of thymidine nucleotides and it decreases the intracellular concentration of dUTP so that uracil cannot be incorporated into DNA. In Pseudomonas paraeruginosa (strain DSM 24068 / PA7) (Pseudomonas aeruginosa (strain PA7)), this protein is Deoxyuridine 5'-triphosphate nucleotidohydrolase.